A 239-amino-acid polypeptide reads, in one-letter code: Probable transcriptional regulatory protein CD630_07950 (239 aa).

The protein belongs to the TACO1 family.

The protein resides in the cytoplasm. The chain is Probable transcriptional regulatory protein CD630_07950 from Clostridioides difficile (strain 630) (Peptoclostridium difficile).